The following is a 60-amino-acid chain: Large ribosomal subunit protein uL30 (60 aa).

Belongs to the universal ribosomal protein uL30 family. As to quaternary structure, part of the 50S ribosomal subunit.

The polypeptide is Large ribosomal subunit protein uL30 (Histophilus somni (strain 2336) (Haemophilus somnus)).